Here is a 295-residue protein sequence, read N- to C-terminus: Acetyl-coenzyme A carboxylase carboxyl transferase subunit beta (295 aa).

Positions 1-20 (MSWLSKLMPSGIRTENTPAK) are disordered. The CoA carboxyltransferase N-terminal domain maps to 28–295 (LWEKCSNCGS…QPHPQDADAA (268 aa)). Zn(2+) is bound by residues cysteine 32, cysteine 35, cysteine 51, and cysteine 54. The C4-type zinc-finger motif lies at 32-54 (CSNCGSALYGPELEENLEVCPKC).

Belongs to the AccD/PCCB family. As to quaternary structure, acetyl-CoA carboxylase is a heterohexamer composed of biotin carboxyl carrier protein (AccB), biotin carboxylase (AccC) and two subunits each of ACCase subunit alpha (AccA) and ACCase subunit beta (AccD). Requires Zn(2+) as cofactor.

The protein resides in the cytoplasm. The catalysed reaction is N(6)-carboxybiotinyl-L-lysyl-[protein] + acetyl-CoA = N(6)-biotinyl-L-lysyl-[protein] + malonyl-CoA. It participates in lipid metabolism; malonyl-CoA biosynthesis; malonyl-CoA from acetyl-CoA: step 1/1. Component of the acetyl coenzyme A carboxylase (ACC) complex. Biotin carboxylase (BC) catalyzes the carboxylation of biotin on its carrier protein (BCCP) and then the CO(2) group is transferred by the transcarboxylase to acetyl-CoA to form malonyl-CoA. This Xanthomonas axonopodis pv. citri (strain 306) protein is Acetyl-coenzyme A carboxylase carboxyl transferase subunit beta.